Reading from the N-terminus, the 376-residue chain is Copper-containing nitrite reductase (376 aa).

The segment at residues 1 to 33 is a signal peptide (tat-type signal); the sequence is MAEQMQISRRTILAGAALAGALAPVLATTSAWG. Residue glutamine 34 is modified to Pyrrolidone carboxylic acid. Plastocyanin-like domains follow at residues 34–211 and 212–376; these read QGAV…YDKI and YYVG…PSGT. The Cu cation site is built by histidine 131, histidine 136, histidine 171, cysteine 172, histidine 181, methionine 186, and histidine 342.

It belongs to the multicopper oxidase family. In terms of assembly, homotrimer. Cu(2+) is required as a cofactor. Cu(+) serves as cofactor. It depends on FAD as a cofactor. In terms of processing, predicted to be exported by the Tat system. The position of the signal peptide cleavage has been experimentally proven.

It is found in the periplasm. The catalysed reaction is nitric oxide + Fe(III)-[cytochrome c] + H2O = Fe(II)-[cytochrome c] + nitrite + 2 H(+). It functions in the pathway nitrogen metabolism; nitrate reduction (denitrification); dinitrogen from nitrate: step 2/4. This is Copper-containing nitrite reductase (nirK) from Alcaligenes faecalis.